Here is a 273-residue protein sequence, read N- to C-terminus: 2,3,4,5-tetrahydropyridine-2,6-dicarboxylate N-succinyltransferase (273 aa).

Arg104 and Asp141 together coordinate substrate.

This sequence belongs to the transferase hexapeptide repeat family. In terms of assembly, homotrimer.

The protein localises to the cytoplasm. It carries out the reaction (S)-2,3,4,5-tetrahydrodipicolinate + succinyl-CoA + H2O = (S)-2-succinylamino-6-oxoheptanedioate + CoA. It functions in the pathway amino-acid biosynthesis; L-lysine biosynthesis via DAP pathway; LL-2,6-diaminopimelate from (S)-tetrahydrodipicolinate (succinylase route): step 1/3. This is 2,3,4,5-tetrahydropyridine-2,6-dicarboxylate N-succinyltransferase from Chromobacterium violaceum (strain ATCC 12472 / DSM 30191 / JCM 1249 / CCUG 213 / NBRC 12614 / NCIMB 9131 / NCTC 9757 / MK).